A 122-amino-acid chain; its full sequence is Small ribosomal subunit protein bS16 (122 aa).

A disordered region spans residues 87-122 (VGKAKQAEARKAGAKNVAKQAAEAKAEETPADNTEA).

It belongs to the bacterial ribosomal protein bS16 family.

This chain is Small ribosomal subunit protein bS16, found in Prochlorococcus marinus (strain MIT 9303).